We begin with the raw amino-acid sequence, 428 residues long: MRYTKSEEAMKVAETLMPGGVNSPVRAFKSVDTPAIFMDHGKGSKIYDIDGNEYIDYVLSWGPLILGHRDPQVISHLHEAIDKGTSFGASTLLENKLAQLVIDRVPSIEKVRMVSSGTEATLDTLRLARGYTGRNKIVKFEGCYHGHSDSLLIKAGSGVATLGLPDSPGVPEGIAKNTITVPYNDLDALKIAFEKFGDDIAGVIVEPVAGNMGVVPPIEGFLQGLRNITTEYGALLIFDEVMTGFRVGYHCAQGYFGVTPDLTCLGKVIGGGLPVGAFGGKKEIMDHIAPLGNIYQAGTLSGNPLAMTSGYETLSQLTPETYEYFNMLGDILEDGLKRVFAKHNVPITVNRAGSMIGYFLNEGPVTNFEQANKSDLKLFAEMYREMAKEGVFLPPSQFEGTFLSTAHTKEDIEKTIQAFDTALSRIVK.

The residue at position 267 (Lys-267) is an N6-(pyridoxal phosphate)lysine.

It belongs to the class-III pyridoxal-phosphate-dependent aminotransferase family. HemL subfamily. In terms of assembly, homodimer. Pyridoxal 5'-phosphate is required as a cofactor.

It is found in the cytoplasm. It catalyses the reaction (S)-4-amino-5-oxopentanoate = 5-aminolevulinate. The protein operates within porphyrin-containing compound metabolism; protoporphyrin-IX biosynthesis; 5-aminolevulinate from L-glutamyl-tRNA(Glu): step 2/2. The sequence is that of Glutamate-1-semialdehyde 2,1-aminomutase 1 from Staphylococcus aureus (strain MW2).